The sequence spans 249 residues: MSGTILITGATSGFGQATARRFVKEGWKVIGTGRRAERLEALAAELGQAFHGIAFDITDEDATEKALAALPDGFRDIDILVNNAGLALGTAPAPQVALKDWQTMVDTNITGLLNITHHLLPTLIKQKGIVVNLSSVAAHYPYLGGNVYGGTKAFLRQFSLGLRSDLHGKGVRVTSIEPGMCETEFTLVRTGGNQEASDNLYKGVNPITADDIANTIYWVASQPKHININSLELMPVNQSFAGFQVYRES.

6–30 (LITGATSGFGQATARRFVKEGWKVI) lines the NADP(+) pocket. A substrate-binding site is contributed by Ser-135. Residue Tyr-148 is the Proton acceptor of the active site.

The protein belongs to the short-chain dehydrogenases/reductases (SDR) family. In terms of assembly, homotetramer.

It carries out the reaction L-serine + NADP(+) = aminoacetaldehyde + CO2 + NADPH. Its function is as follows. Catalyzes the oxidation of the hydroxyl group of serine to form 2-aminomalonate semialdehyde which is spontaneously converted into 2-aminoacetaldehyde and CO(2). Also acts on D-serine, L-glycerate, D-glycerate and 2-methyl-DL-serine. Does not act on O-methyl-DL-serine and L-threonine. The chain is Serine 3-dehydrogenase (sdh) from Agrobacterium fabrum (strain C58 / ATCC 33970) (Agrobacterium tumefaciens (strain C58)).